Here is a 251-residue protein sequence, read N- to C-terminus: DNA repair protein RecO (251 aa).

It belongs to the RecO family.

Functionally, involved in DNA repair and RecF pathway recombination. The chain is DNA repair protein RecO from Staphylococcus saprophyticus subsp. saprophyticus (strain ATCC 15305 / DSM 20229 / NCIMB 8711 / NCTC 7292 / S-41).